The chain runs to 152 residues: Prostaglandin E synthase (152 aa).

The Lumenal segment spans residues 1 to 12 (MPAHSLAMSSPA). A helical membrane pass occupies residues 13–41 (LPAFLLCSTLLVIKMYVVAIITGQVRLRK). Residue Arg-38 participates in glutathione binding. Residues 42–60 (KAFANPEDALRHGGPQYCR) lie on the Cytoplasmic side of the membrane. The helical transmembrane segment at 61–90 (SDPDVERCLRAHRNDMETIYPFLFLGFVYS) threads the bilayer. Position 73-77 (73-77 (RNDME)) interacts with glutathione. The Lumenal portion of the chain corresponds to 91-95 (FLGPN). The helical transmembrane segment at 96-119 (PFVAWMHFLVFLLGRVVHTVAYLG) threads the bilayer. The glutathione site is built by His-113 and Tyr-117. The Cytoplasmic segment spans residues 120–123 (KLRA). The chain crosses the membrane as a helical span at residues 124 to 152 (PIRSVTYTLAQLPCASMALQILWEAARHL). 126 to 130 (RSVTY) provides a ligand contact to glutathione.

The protein belongs to the MAPEG family. In terms of assembly, homotrimer. It depends on glutathione as a cofactor.

The protein localises to the membrane. It is found in the cytoplasm. It localises to the perinuclear region. The catalysed reaction is prostaglandin H2 = prostaglandin E2. The enzyme catalyses 2-glyceryl-prostaglandin H2 = 2-glyceryl-prostaglandin E2. It carries out the reaction prostaglandin G2 = (15S)-15-hydroperoxy-prostaglandin E2. It catalyses the reaction 1-chloro-2,4-dinitrobenzene + glutathione = 2,4-dinitrophenyl-S-glutathione + chloride + H(+). The catalysed reaction is (5S)-hydroperoxy-(6E,8Z,11Z,14Z)-eicosatetraenoate + 2 glutathione = (5S)-hydroxy-(6E,8Z,11Z,14Z)-eicosatetraenoate + glutathione disulfide + H2O. It functions in the pathway lipid metabolism; prostaglandin biosynthesis. In terms of biological role, terminal enzyme of the cyclooxygenase (COX)-2-mediated prostaglandin E2 (PGE2) biosynthetic pathway. Catalyzes the glutathione-dependent oxidoreduction of prostaglandin endoperoxide H2 (PGH2) to prostaglandin E2 (PGE2) in response to inflammatory stimuli. Plays a key role in inflammation response, fever and pain. Also catalyzes the oxidoreduction of endocannabinoids into prostaglandin glycerol esters and PGG2 into 15-hydroperoxy-PGE2. In addition, displays low glutathione transferase and glutathione-dependent peroxidase activities, toward 1-chloro-2,4-dinitrobenzene and 5-hydroperoxyicosatetraenoic acid (5-HPETE), respectively. The polypeptide is Prostaglandin E synthase (PTGES) (Macaca fascicularis (Crab-eating macaque)).